The sequence spans 361 residues: Chorismate synthase (361 aa).

NADP(+) contacts are provided by R48 and R54. FMN contacts are provided by residues 125 to 127 (RSS), 238 to 239 (NA), G278, 293 to 297 (KPTSS), and R319.

Belongs to the chorismate synthase family. As to quaternary structure, homotetramer. FMNH2 is required as a cofactor.

It catalyses the reaction 5-O-(1-carboxyvinyl)-3-phosphoshikimate = chorismate + phosphate. The protein operates within metabolic intermediate biosynthesis; chorismate biosynthesis; chorismate from D-erythrose 4-phosphate and phosphoenolpyruvate: step 7/7. In terms of biological role, catalyzes the anti-1,4-elimination of the C-3 phosphate and the C-6 proR hydrogen from 5-enolpyruvylshikimate-3-phosphate (EPSP) to yield chorismate, which is the branch point compound that serves as the starting substrate for the three terminal pathways of aromatic amino acid biosynthesis. This reaction introduces a second double bond into the aromatic ring system. In Sodalis glossinidius (strain morsitans), this protein is Chorismate synthase.